Reading from the N-terminus, the 296-residue chain is Glycine--tRNA ligase alpha subunit (296 aa).

Belongs to the class-II aminoacyl-tRNA synthetase family. As to quaternary structure, tetramer of two alpha and two beta subunits.

It is found in the cytoplasm. It carries out the reaction tRNA(Gly) + glycine + ATP = glycyl-tRNA(Gly) + AMP + diphosphate. This Francisella philomiragia subsp. philomiragia (strain ATCC 25017 / CCUG 19701 / FSC 153 / O#319-036) protein is Glycine--tRNA ligase alpha subunit.